The following is a 158-amino-acid chain: Cyclic pyranopterin monophosphate synthase (158 aa).

Substrate contacts are provided by residues 74-76 (MCH) and 112-113 (ME). Aspartate 127 is an active-site residue.

This sequence belongs to the MoaC family. As to quaternary structure, homohexamer; trimer of dimers.

It carries out the reaction (8S)-3',8-cyclo-7,8-dihydroguanosine 5'-triphosphate = cyclic pyranopterin phosphate + diphosphate. It participates in cofactor biosynthesis; molybdopterin biosynthesis. In terms of biological role, catalyzes the conversion of (8S)-3',8-cyclo-7,8-dihydroguanosine 5'-triphosphate to cyclic pyranopterin monophosphate (cPMP). The protein is Cyclic pyranopterin monophosphate synthase of Thermoanaerobacter pseudethanolicus (strain ATCC 33223 / 39E) (Clostridium thermohydrosulfuricum).